The following is a 429-amino-acid chain: Small ribosomal subunit protein mS47 (429 aa).

E141, G166, E189, and D197 together coordinate substrate.

Belongs to the enoyl-CoA hydratase/isomerase family. Mitochondrion-specific ribosomal protein mS47 subfamily. In terms of assembly, component of the mitochondrial small ribosomal subunit (mt-SSU). Mature yeast 74S mitochondrial ribosomes consist of a small (37S) and a large (54S) subunit. The 37S small subunit contains a 15S ribosomal RNA (15S mt-rRNA) and at least 32 different proteins. The 54S large subunit contains a 21S rRNA (21S mt-rRNA) and at least 45 different proteins. mS47/snr1 forms a protuberance of the yeast mitoribosome and retains a solvent-exposed cavity likely capable of accommodating a substrate, in accordance with it being an active enzyme as well as an integral constituent of the mitoribosome.

It is found in the mitochondrion. The enzyme catalyses 3-hydroxy-2-methylpropanoyl-CoA + H2O = 3-hydroxy-2-methylpropanoate + CoA + H(+). Its pathway is amino-acid degradation; L-valine degradation. Its function is as follows. Component of the mitochondrial ribosome (mitoribosome), a dedicated translation machinery responsible for the synthesis of mitochondrial genome-encoded proteins, including at least some of the essential transmembrane subunits of the mitochondrial respiratory chain. The mitoribosomes are attached to the mitochondrial inner membrane and translation products are cotranslationally integrated into the membrane. mS47/snr1 has enzymatic activity in vitro, and is able to catalyze the specific hydrolysis of 3-hydroxyisobutyryl-CoA (HIBYL-CoA). However, because the turnover rate of mS47/snr1 is only a fraction of that of the homologous mammalian enzyme, the physiological function of this activity remains unclear. Has an indirect role in endocytic membrane trafficking. This is Small ribosomal subunit protein mS47 (snr1) from Schizosaccharomyces pombe (strain 972 / ATCC 24843) (Fission yeast).